A 312-amino-acid polypeptide reads, in one-letter code: DNA-directed RNA polymerase subunit alpha (312 aa).

The alpha N-terminal domain (alpha-NTD) stretch occupies residues 1-229; that stretch reads MLQYQIDRIE…ELFQPLATVT (229 aa). The interval 239-312 is alpha C-terminal domain (alpha-CTD); it reads EPSAEAQIPL…ISIPQSRTSA (74 aa).

This sequence belongs to the RNA polymerase alpha chain family. As to quaternary structure, in cyanobacteria the RNAP catalytic core is composed of 2 alpha, 1 beta, 1 beta', 1 gamma and 1 omega subunit. When a sigma factor is associated with the core the holoenzyme is formed, which can initiate transcription.

It carries out the reaction RNA(n) + a ribonucleoside 5'-triphosphate = RNA(n+1) + diphosphate. In terms of biological role, DNA-dependent RNA polymerase catalyzes the transcription of DNA into RNA using the four ribonucleoside triphosphates as substrates. This Synechococcus sp. (strain CC9605) protein is DNA-directed RNA polymerase subunit alpha.